Here is a 590-residue protein sequence, read N- to C-terminus: Monoterepene synthase TPS1, chloropastic (590 aa).

Residues 1–42 (MALNTFLHFPPCSLSSFSCAVPKLPLAIFHKTMARQIRCPRA) constitute a chloroplast transit peptide. Arg304, Asp341, Asp345, Arg483, and Asp486 together coordinate (2E)-geranyl diphosphate. Asp341 and Asp345 together coordinate Mg(2+). Residues 341 to 345 (DDMYD) carry the DDXXD motif motif. Asp486, Thr490, and Glu494 together coordinate Mg(2+).

The protein belongs to the terpene synthase family. Tpsb subfamily. Monomer. Requires Mg(2+) as cofactor.

Its subcellular location is the plastid. The protein localises to the chloroplast. It carries out the reaction (2E)-geranyl diphosphate = beta-thujene + diphosphate. It catalyses the reaction (2E)-geranyl diphosphate = sabinene + diphosphate. The enzyme catalyses (2E)-geranyl diphosphate = beta-pinene + diphosphate. The catalysed reaction is (2E)-geranyl diphosphate = alpha-terpinene + diphosphate. It participates in secondary metabolite biosynthesis; terpenoid biosynthesis. In terms of biological role, monoterpene synthase involved in the biosynthesis of volatile organic compounds. Mediates the conversion of (2E)-geranyl diphosphate (GPP) into beta-thujene, sabinene, beta-pinene and alpha-terpinene. Does not use (2E,6E)-farnesyl diphosphate (FPP) as substrate. The chain is Monoterepene synthase TPS1, chloropastic from Cananga odorata (Ylang-ylang tree).